The chain runs to 766 residues: 5-methyltetrahydropteroyltriglutamate--homocysteine methyltransferase (766 aa).

5-methyltetrahydropteroyltri-L-glutamate-binding positions include 16–19 (RELK) and lysine 119. Residues 440-442 (IGS) and glutamate 493 contribute to the L-homocysteine site. L-methionine-binding positions include 440–442 (IGS) and glutamate 493. Residues 524–525 (RC) and tryptophan 570 contribute to the 5-methyltetrahydropteroyltri-L-glutamate site. Aspartate 608 is a binding site for L-homocysteine. Aspartate 608 provides a ligand contact to L-methionine. Position 614 (glutamate 614) interacts with 5-methyltetrahydropteroyltri-L-glutamate. Zn(2+) is bound by residues histidine 650, cysteine 652, and glutamate 674. The Proton donor role is filled by histidine 703. Cysteine 735 contributes to the Zn(2+) binding site.

This sequence belongs to the vitamin-B12 independent methionine synthase family. It depends on Zn(2+) as a cofactor.

The catalysed reaction is 5-methyltetrahydropteroyltri-L-glutamate + L-homocysteine = tetrahydropteroyltri-L-glutamate + L-methionine. Its pathway is amino-acid biosynthesis; L-methionine biosynthesis via de novo pathway; L-methionine from L-homocysteine (MetE route): step 1/1. Its function is as follows. Catalyzes the transfer of a methyl group from 5-methyltetrahydrofolate to homocysteine resulting in methionine formation. In Pseudomonas aeruginosa (strain LESB58), this protein is 5-methyltetrahydropteroyltriglutamate--homocysteine methyltransferase.